The primary structure comprises 872 residues: Alanine--tRNA ligase (872 aa).

Residues His567, His571, Cys669, and His673 each contribute to the Zn(2+) site.

It belongs to the class-II aminoacyl-tRNA synthetase family. The cofactor is Zn(2+).

It is found in the cytoplasm. It catalyses the reaction tRNA(Ala) + L-alanine + ATP = L-alanyl-tRNA(Ala) + AMP + diphosphate. In terms of biological role, catalyzes the attachment of alanine to tRNA(Ala) in a two-step reaction: alanine is first activated by ATP to form Ala-AMP and then transferred to the acceptor end of tRNA(Ala). Also edits incorrectly charged Ser-tRNA(Ala) and Gly-tRNA(Ala) via its editing domain. The polypeptide is Alanine--tRNA ligase (Streptococcus agalactiae serotype III (strain NEM316)).